The primary structure comprises 49 residues: Protein YlcJ (49 aa).

An N-terminal signal peptide occupies residues Met1 to Ser21.

In Escherichia coli (strain K12), this protein is Protein YlcJ.